Here is a 264-residue protein sequence, read N- to C-terminus: ATP synthase subunit a (264 aa).

5 helical membrane passes run 39-59 (LDTLIISVVLGALFILIFYIV), 97-117 (VAPLALTIFIWVFLMNFMDLV), 139-159 (TADPTLTFAMSITVFVLVIFY), 205-225 (LFGNLFAGELIFILIALLPWW), and 239-259 (LLVITVQAFIFMMLTVVYISL).

This sequence belongs to the ATPase A chain family. F-type ATPases have 2 components, CF(1) - the catalytic core - and CF(0) - the membrane proton channel. CF(1) has five subunits: alpha(3), beta(3), gamma(1), delta(1), epsilon(1). CF(0) has three main subunits: a(1), b(2) and c(9-12). The alpha and beta chains form an alternating ring which encloses part of the gamma chain. CF(1) is attached to CF(0) by a central stalk formed by the gamma and epsilon chains, while a peripheral stalk is formed by the delta and b chains.

The protein localises to the cell inner membrane. Functionally, key component of the proton channel; it plays a direct role in the translocation of protons across the membrane. The chain is ATP synthase subunit a from Coxiella burnetii (strain CbuK_Q154) (Coxiella burnetii (strain Q154)).